Reading from the N-terminus, the 395-residue chain is uncharacterized protein (395 aa).

The N-terminal stretch at 1-18 (MKHVIMLYFIAAATLFSS) is a signal peptide. A lipid anchor (N-palmitoyl cysteine) is attached at cysteine 19. Cysteine 19 carries the S-diacylglycerol cysteine lipid modification.

The protein localises to the cell outer membrane. In terms of biological role, may be involved in ulvan degradation. Ulvan is the main polysaccharide component of the Ulvales (green seaweed) cell wall. It is composed of disaccharide building blocks comprising 3-sulfated rhamnose (Rha3S) linked to D-glucuronic acid (GlcA), L-iduronic acid (IduA), or D-xylose (Xyl). This is an uncharacterized protein from Formosa agariphila (strain DSM 15362 / KCTC 12365 / LMG 23005 / KMM 3901 / M-2Alg 35-1).